Here is a 359-residue protein sequence, read N- to C-terminus: UDP-N-acetylglucosamine--N-acetylmuramyl-(pentapeptide) pyrophosphoryl-undecaprenol N-acetylglucosamine transferase (359 aa).

Residues 15–17, Asn-127, Arg-166, Ser-191, Ile-245, 264–269, and Gln-290 contribute to the UDP-N-acetyl-alpha-D-glucosamine site; these read TGG and ALTVSE.

This sequence belongs to the glycosyltransferase 28 family. MurG subfamily.

It is found in the cell inner membrane. It carries out the reaction di-trans,octa-cis-undecaprenyl diphospho-N-acetyl-alpha-D-muramoyl-L-alanyl-D-glutamyl-meso-2,6-diaminopimeloyl-D-alanyl-D-alanine + UDP-N-acetyl-alpha-D-glucosamine = di-trans,octa-cis-undecaprenyl diphospho-[N-acetyl-alpha-D-glucosaminyl-(1-&gt;4)]-N-acetyl-alpha-D-muramoyl-L-alanyl-D-glutamyl-meso-2,6-diaminopimeloyl-D-alanyl-D-alanine + UDP + H(+). It participates in cell wall biogenesis; peptidoglycan biosynthesis. In terms of biological role, cell wall formation. Catalyzes the transfer of a GlcNAc subunit on undecaprenyl-pyrophosphoryl-MurNAc-pentapeptide (lipid intermediate I) to form undecaprenyl-pyrophosphoryl-MurNAc-(pentapeptide)GlcNAc (lipid intermediate II). This Pseudomonas putida (strain GB-1) protein is UDP-N-acetylglucosamine--N-acetylmuramyl-(pentapeptide) pyrophosphoryl-undecaprenol N-acetylglucosamine transferase.